We begin with the raw amino-acid sequence, 119 residues long: MARFVVVALLALLSLSGLEAIQHAPKIQVYSRHPAENGKPNFLNCYVSGFHPSDIEVDLLKNGKKIEKVEHSDLSFSKDWSFYLLYYTEFTPNEKDEYACRVSHVTFPTPKTVKWDRTM.

An N-terminal signal peptide occupies residues 1–20; sequence MARFVVVALLALLSLSGLEA. The Ig-like C1-type domain occupies 25–114; it reads PKIQVYSRHP…VTFPTPKTVK (90 aa). Residues C45 and C100 are joined by a disulfide bond.

It belongs to the beta-2-microglobulin family. In terms of assembly, heterodimer of an alpha chain and a beta chain. Beta-2-microglobulin is the beta-chain of major histocompatibility complex class I molecules.

The protein localises to the secreted. Its function is as follows. Component of the class I major histocompatibility complex (MHC). Involved in the presentation of peptide antigens to the immune system. The protein is Beta-2-microglobulin (B2M) of Alouatta seniculus (Red howler monkey).